The following is a 28-amino-acid chain: Ranatuerin-2LTa (28 aa).

Cysteine 23 and cysteine 28 form a disulfide bridge.

In terms of tissue distribution, expressed by the skin glands.

Its subcellular location is the secreted. In terms of biological role, has antibacterial activity. This chain is Ranatuerin-2LTa, found in Rana latastei (Italian agile frog).